Consider the following 301-residue polypeptide: 3-methyl-2-oxobutanoate hydroxymethyltransferase (301 aa).

Over residues 1–12 (MAPSNLPESTTP) the composition is skewed to polar residues. The disordered stretch occupies residues 1–24 (MAPSNLPESTTPAEVPAPYGTGPA). 2 residues coordinate Mg(2+): Asp-82 and Asp-121. 3-methyl-2-oxobutanoate contacts are provided by residues 82–83 (DS), Asp-121, and Lys-151. Residue Glu-153 coordinates Mg(2+). Glu-219 (proton acceptor) is an active-site residue.

Belongs to the PanB family. In terms of assembly, homodecamer; pentamer of dimers. Mg(2+) is required as a cofactor.

The protein localises to the cytoplasm. The catalysed reaction is 3-methyl-2-oxobutanoate + (6R)-5,10-methylene-5,6,7,8-tetrahydrofolate + H2O = 2-dehydropantoate + (6S)-5,6,7,8-tetrahydrofolate. It functions in the pathway cofactor biosynthesis; (R)-pantothenate biosynthesis; (R)-pantoate from 3-methyl-2-oxobutanoate: step 1/2. Catalyzes the reversible reaction in which hydroxymethyl group from 5,10-methylenetetrahydrofolate is transferred onto alpha-ketoisovalerate to form ketopantoate. The sequence is that of 3-methyl-2-oxobutanoate hydroxymethyltransferase from Paenarthrobacter aurescens (strain TC1).